We begin with the raw amino-acid sequence, 472 residues long: Spliceosome-associated protein CWC27 homolog (472 aa).

Ser2 is subject to N-acetylserine. A PPIase cyclophilin-type domain is found at 11–166 (TNGKVLLKTT…NPHKIKSCEV (156 aa)). N-linked (GlcNAc...) asparagine glycosylation is found at Asn109 and Asn201. A coiled-coil region spans residues 206–230 (SFGEEAEEEEEEVNRVSQSMKGKSK). Disordered stretches follow at residues 206 to 386 (SFGE…DQTL) and 398 to 472 (QAIA…KERR). Positions 231–241 (SSHDLLKDDPH) are enriched in basic and acidic residues. The segment covering 257–268 (DLVDDGEDESAE) has biased composition (acidic residues). Composition is skewed to basic and acidic residues over residues 269–286 (HDEY…ERIA), 304–347 (EVEK…KRSE), and 359–371 (EYRR…EALR). The stretch at 306–377 (EKKSVSRSEE…EALRKQQSKK (72 aa)) forms a coiled coil. Ser346 bears the Phosphoserine mark. A compositionally biased stretch (acidic residues) spans 404-418 (PENDIPETEVEDDEG). 2 stretches are compositionally biased toward basic and acidic residues: residues 425–437 (QFED…KDAS) and 457–472 (RREE…KERR).

This sequence belongs to the cyclophilin-type PPIase family. Part of the activated spliceosome B/catalytic step 1 spliceosome, one of the forms of the spliceosome which has a well-formed active site but still cannot catalyze the branching reaction and is composed at least of 52 proteins, the U2, U5 and U6 snRNAs and the pre-mRNA. Recruited during early steps of activated spliceosome B maturation, it is probably one of the first proteins released from this complex as he matures to the spliceosome C complex. Component of the minor spliceosome, which splices U12-type introns.

The protein resides in the nucleus. Functionally, as part of the spliceosome, plays a role in pre-mRNA splicing. Probable inactive PPIase with no peptidyl-prolyl cis-trans isomerase activity. As a component of the minor spliceosome, involved in the splicing of U12-type introns in pre-mRNAs. This Homo sapiens (Human) protein is Spliceosome-associated protein CWC27 homolog.